A 411-amino-acid polypeptide reads, in one-letter code: Translation initiation factor 2 subunit gamma (411 aa).

The 195-residue stretch at Gln-9–Lys-203 folds into the tr-type G domain. The G1 stretch occupies residues Gly-18–Thr-25. Mg(2+) contacts are provided by Asp-21, Thr-25, Gly-46, and Thr-48. Residue Asp-21 to Thr-26 coordinates GTP. The interval Gly-46 to Lys-50 is G2. Zn(2+) contacts are provided by Cys-61, Cys-64, Cys-73, and Cys-76. The G3 stretch occupies residues Asp-90–Gly-93. Residues Asn-146 to Glu-149 and Ser-181 to Leu-183 contribute to the GTP site. The interval Asn-146–Glu-149 is G4. The interval Ser-181–Leu-183 is G5.

The protein belongs to the TRAFAC class translation factor GTPase superfamily. Classic translation factor GTPase family. EIF2G subfamily. In terms of assembly, heterotrimer composed of an alpha, a beta and a gamma chain. It depends on Mg(2+) as a cofactor.

It catalyses the reaction GTP + H2O = GDP + phosphate + H(+). Functionally, eIF-2 functions in the early steps of protein synthesis by forming a ternary complex with GTP and initiator tRNA. The protein is Translation initiation factor 2 subunit gamma of Pyrococcus furiosus (strain ATCC 43587 / DSM 3638 / JCM 8422 / Vc1).